The chain runs to 123 residues: MSLTNEQIIEAIGQKSVMEIVELIKAMEETFGVTAAAAVAAGPAAGAAAAVEEQTEFNVVLAEAGDKKVNVIKAVRELTGLGLKEAKEKVDTAPQVIAEGLTKEAAEDAKKKLEEAGAKVELK.

This sequence belongs to the bacterial ribosomal protein bL12 family. As to quaternary structure, homodimer. Part of the ribosomal stalk of the 50S ribosomal subunit. Forms a multimeric L10(L12)X complex, where L10 forms an elongated spine to which 2 to 4 L12 dimers bind in a sequential fashion. Binds GTP-bound translation factors.

In terms of biological role, forms part of the ribosomal stalk which helps the ribosome interact with GTP-bound translation factors. Is thus essential for accurate translation. This chain is Large ribosomal subunit protein bL12, found in Ectopseudomonas mendocina (strain ymp) (Pseudomonas mendocina).